The sequence spans 243 residues: Geranylgeranylglyceryl phosphate synthase (243 aa).

Mg(2+) contacts are provided by aspartate 22 and serine 51. Sn-glycerol 1-phosphate-binding positions include 169-175 (YLEAGSG), 200-201 (GG), and 222-223 (GT).

This sequence belongs to the GGGP/HepGP synthase family. Group II subfamily. The cofactor is Mg(2+).

Its subcellular location is the cytoplasm. The enzyme catalyses sn-glycerol 1-phosphate + (2E,6E,10E)-geranylgeranyl diphosphate = sn-3-O-(geranylgeranyl)glycerol 1-phosphate + diphosphate. Its pathway is membrane lipid metabolism; glycerophospholipid metabolism. Its function is as follows. Prenyltransferase that catalyzes the transfer of the geranylgeranyl moiety of geranylgeranyl diphosphate (GGPP) to the C3 hydroxyl of sn-glycerol-1-phosphate (G1P). This reaction is the first ether-bond-formation step in the biosynthesis of archaeal membrane lipids. This Methanosphaera stadtmanae (strain ATCC 43021 / DSM 3091 / JCM 11832 / MCB-3) protein is Geranylgeranylglyceryl phosphate synthase.